The chain runs to 487 residues: Uronate isomerase (487 aa).

It belongs to the metallo-dependent hydrolases superfamily. Uronate isomerase family.

The enzyme catalyses D-glucuronate = D-fructuronate. It catalyses the reaction aldehydo-D-galacturonate = keto-D-tagaturonate. It participates in carbohydrate metabolism; pentose and glucuronate interconversion. This is Uronate isomerase from Caulobacter vibrioides (strain ATCC 19089 / CIP 103742 / CB 15) (Caulobacter crescentus).